Consider the following 544-residue polypeptide: Protein kinase dsk1 (544 aa).

A Protein kinase domain is found at 81–516 (YVVERKLGWG…AGYMSNSPWL (436 aa)). Residues 87–95 (LGWGHFSTV) and K110 contribute to the ATP site. D214 (proton acceptor) is an active-site residue. 2 disordered regions span residues 235-299 (PATT…SSPF) and 316-341 (ISLR…SLIL). A compositionally biased stretch (low complexity) spans 237-254 (TTSSPTSNTSSSKTRNNT). 2 stretches are compositionally biased toward polar residues: residues 281 to 299 (KNPT…SSPF) and 327 to 337 (HPNSPFSSGDN).

It belongs to the protein kinase superfamily. Ser/Thr protein kinase family. Phosphorylated on Ser residue(s).

It localises to the cytoplasm. The protein resides in the nucleus. It catalyses the reaction L-seryl-[protein] + ATP = O-phospho-L-seryl-[protein] + ADP + H(+). The enzyme catalyses L-threonyl-[protein] + ATP = O-phospho-L-threonyl-[protein] + ADP + H(+). May play an important role in mitotic control by altering cellular location, degree of phosphorylation and kinase activity. Abundant expression accelerates the exit when cells are in M-phase and also delays the entry into mitosis when cells are in G2. Phosphorylates prp2 in vitro and so may have a role in co-ordinating pre-mRNA splicing with the progression of the cell division cycle. This Schizosaccharomyces pombe (strain 972 / ATCC 24843) (Fission yeast) protein is Protein kinase dsk1 (dsk1).